We begin with the raw amino-acid sequence, 386 residues long: Succinate--CoA ligase [ADP-forming] subunit beta (386 aa).

One can recognise an ATP-grasp domain in the interval 9–244 (KEILRSYGVS…LDEEDPKEVE (236 aa)). ATP contacts are provided by residues Lys46, 53 to 55 (GRG), Glu99, Cys102, and Glu107. Mg(2+) contacts are provided by Asn199 and Asp213. Substrate contacts are provided by residues Asn264 and 321–323 (GIM).

It belongs to the succinate/malate CoA ligase beta subunit family. In terms of assembly, heterotetramer of two alpha and two beta subunits. Requires Mg(2+) as cofactor.

The catalysed reaction is succinate + ATP + CoA = succinyl-CoA + ADP + phosphate. It catalyses the reaction GTP + succinate + CoA = succinyl-CoA + GDP + phosphate. It functions in the pathway carbohydrate metabolism; tricarboxylic acid cycle; succinate from succinyl-CoA (ligase route): step 1/1. Functionally, succinyl-CoA synthetase functions in the citric acid cycle (TCA), coupling the hydrolysis of succinyl-CoA to the synthesis of either ATP or GTP and thus represents the only step of substrate-level phosphorylation in the TCA. The beta subunit provides nucleotide specificity of the enzyme and binds the substrate succinate, while the binding sites for coenzyme A and phosphate are found in the alpha subunit. The sequence is that of Succinate--CoA ligase [ADP-forming] subunit beta from Geobacillus kaustophilus (strain HTA426).